The primary structure comprises 274 residues: 5-deoxy-glucuronate isomerase (274 aa).

This sequence belongs to the isomerase IolB family.

The enzyme catalyses 5-deoxy-D-glucuronate = 5-dehydro-2-deoxy-D-gluconate. Its pathway is polyol metabolism; myo-inositol degradation into acetyl-CoA; acetyl-CoA from myo-inositol: step 4/7. Its function is as follows. Involved in the isomerization of 5-deoxy-glucuronate (5DG) to 5-dehydro-2-deoxy-D-gluconate (DKG or 2-deoxy-5-keto-D-gluconate). The sequence is that of 5-deoxy-glucuronate isomerase from Geobacillus thermodenitrificans (strain NG80-2).